Reading from the N-terminus, the 1011-residue chain is CRM-domain containing factor CFM2, chloroplastic (1011 aa).

The transit peptide at 1–45 (MLLPLFHQQPLILAKTFPDRIFPPFLVPNTLVSRRNVSRANSGIF) directs the protein to the chloroplast. Over residues 77-90 (HDSPTRRITGEESG) the composition is skewed to basic and acidic residues. The disordered stretch occupies residues 77–96 (HDSPTRRITGEESGKNSPGE). CRM domains follow at residues 164–260 (LTLP…YFVS), 376–473 (PKLT…AVSS), and 577–677 (EGIT…QCLR). Disordered regions lie at residues 721 to 810 (DSAT…GNSL) and 841 to 872 (LNAN…DGLV). Polar residues predominate over residues 722–736 (SATNETWSDGESSNM). Over residues 743–757 (ENQHTEPEKAREKIE) the composition is skewed to basic and acidic residues. The span at 762 to 771 (SDLSVPSSGE) shows a compositional bias: polar residues. The span at 772–782 (ENWEDDSEGEV) shows a compositional bias: acidic residues. Over residues 849-859 (GSSTGSGSQIS) the composition is skewed to polar residues. The 100-residue stretch at 873 to 972 (TDLSNRERLI…WGAEEEMKSF (100 aa)) folds into the CRM 4 domain.

Interacts with RNA. Part of large ribonucleo-protein particles that contain CAF1 and/or CAF2.

The protein resides in the plastid. The protein localises to the chloroplast stroma. Its function is as follows. Binds specific group II introns in chloroplasts and facilitates their splicing. Acts on both subgroup IIA and subgroup IIB introns. The substrates of the subgroup IIB also require the CRM domain proteins CAF1 or CAF2, with a simultaneous binding of CFM2 and CAF1 or CAF2. Can bind to and promote the splicing of the single group I intron in chloroplast tRNA transcript of trnL-UAA gene. The polypeptide is CRM-domain containing factor CFM2, chloroplastic (Arabidopsis thaliana (Mouse-ear cress)).